A 292-amino-acid polypeptide reads, in one-letter code: Formamidopyrimidine-DNA glycosylase (292 aa).

Residue proline 2 is the Schiff-base intermediate with DNA of the active site. The active-site Proton donor is the glutamate 3. Residue lysine 61 is the Proton donor; for beta-elimination activity of the active site. Residues histidine 96, arginine 115, and lysine 161 each contribute to the DNA site. The segment at 247 to 281 adopts an FPG-type zinc-finger fold; the sequence is SAYGQEDRPCPRCGTAIRREKFMNRSSFSCPKCQP. The Proton donor; for delta-elimination activity role is filled by arginine 271.

Belongs to the FPG family. In terms of assembly, monomer. Requires Zn(2+) as cofactor.

The catalysed reaction is Hydrolysis of DNA containing ring-opened 7-methylguanine residues, releasing 2,6-diamino-4-hydroxy-5-(N-methyl)formamidopyrimidine.. It carries out the reaction 2'-deoxyribonucleotide-(2'-deoxyribose 5'-phosphate)-2'-deoxyribonucleotide-DNA = a 3'-end 2'-deoxyribonucleotide-(2,3-dehydro-2,3-deoxyribose 5'-phosphate)-DNA + a 5'-end 5'-phospho-2'-deoxyribonucleoside-DNA + H(+). Its function is as follows. Involved in base excision repair of DNA damaged by oxidation or by mutagenic agents. Acts as a DNA glycosylase that recognizes and removes damaged bases. Has a preference for oxidized purines, such as 7,8-dihydro-8-oxoguanine (8-oxoG). Has AP (apurinic/apyrimidinic) lyase activity and introduces nicks in the DNA strand. Cleaves the DNA backbone by beta-delta elimination to generate a single-strand break at the site of the removed base with both 3'- and 5'-phosphates. This Rhodococcus jostii (strain RHA1) protein is Formamidopyrimidine-DNA glycosylase.